The chain runs to 89 residues: Small ribosomal subunit protein uS15 (89 aa).

This sequence belongs to the universal ribosomal protein uS15 family. Part of the 30S ribosomal subunit. Forms a bridge to the 50S subunit in the 70S ribosome, contacting the 23S rRNA.

Its function is as follows. One of the primary rRNA binding proteins, it binds directly to 16S rRNA where it helps nucleate assembly of the platform of the 30S subunit by binding and bridging several RNA helices of the 16S rRNA. In terms of biological role, forms an intersubunit bridge (bridge B4) with the 23S rRNA of the 50S subunit in the ribosome. This chain is Small ribosomal subunit protein uS15, found in Pectobacterium carotovorum subsp. carotovorum (strain PC1).